Here is a 229-residue protein sequence, read N- to C-terminus: Putative germin-like protein 12-3 (229 aa).

Residues Met1–Ala22 form the signal peptide. Cys32 and Cys47 are oxidised to a cystine. One can recognise a Cupin type-1 domain in the interval Ala62–Asp217. N-linked (GlcNAc...) asparagine glycosylation is present at Asn78. Mn(2+)-binding residues include His111, His113, Glu118, and His162.

Belongs to the germin family. Oligomer (believed to be a pentamer but probably hexamer).

The protein localises to the secreted. The protein resides in the extracellular space. It is found in the apoplast. In terms of biological role, may play a role in plant defense. Probably has no oxalate oxidase activity even if the active site is conserved. This Oryza sativa subsp. japonica (Rice) protein is Putative germin-like protein 12-3.